Reading from the N-terminus, the 462-residue chain is Chromosomal replication initiator protein DnaA (462 aa).

Positions 1–84 (MAVSLWQQCI…RFDIGSRPSA (84 aa)) are domain I, interacts with DnaA modulators. The segment at 84 to 125 (AKKPSVPAPIAPTRVANTQTKATVGTTFNVQAEPMANANHRS) is domain II. Residues 126 to 342 (NINPSYQFDN…GALNRVIANA (217 aa)) form a domain III, AAA+ region region. G170, G172, K173, and T174 together coordinate ATP. The segment at 343-462 (NFTGRPITID…YANLIRTLSS (120 aa)) is domain IV, binds dsDNA.

It belongs to the DnaA family. As to quaternary structure, oligomerizes as a right-handed, spiral filament on DNA at oriC.

The protein resides in the cytoplasm. Functionally, plays an essential role in the initiation and regulation of chromosomal replication. ATP-DnaA binds to the origin of replication (oriC) to initiate formation of the DNA replication initiation complex once per cell cycle. Binds the DnaA box (a 9 base pair repeat at the origin) and separates the double-stranded (ds)DNA. Forms a right-handed helical filament on oriC DNA; dsDNA binds to the exterior of the filament while single-stranded (ss)DNA is stabiized in the filament's interior. The ATP-DnaA-oriC complex binds and stabilizes one strand of the AT-rich DNA unwinding element (DUE), permitting loading of DNA polymerase. After initiation quickly degrades to an ADP-DnaA complex that is not apt for DNA replication. Binds acidic phospholipids. The chain is Chromosomal replication initiator protein DnaA from Shewanella baltica (strain OS195).